A 143-amino-acid polypeptide reads, in one-letter code: Large ribosomal subunit protein uL11 (143 aa).

The protein belongs to the universal ribosomal protein uL11 family. In terms of assembly, part of the ribosomal stalk of the 50S ribosomal subunit. Interacts with L10 and the large rRNA to form the base of the stalk. L10 forms an elongated spine to which L12 dimers bind in a sequential fashion forming a multimeric L10(L12)X complex. One or more lysine residues are methylated.

Functionally, forms part of the ribosomal stalk which helps the ribosome interact with GTP-bound translation factors. The protein is Large ribosomal subunit protein uL11 of Erythrobacter litoralis (strain HTCC2594).